Consider the following 248-residue polypeptide: MAPGAPSSSPSPILAALLFSSLVLSPTLAIVVYTDREVYGAVGSQVTLHCSFWSSEWVSDDISFTWRYQPEGGRDAISIFHYAKGQPYIDEVGTFKERIQWVGDPSWKDGSIVIHNLDYSDNGTFTCDVKNPPDIVGKTSQVTLYVFEKVPTRYGVVLGAVIGGILGVVLLLLLLFYLIRYCWLRRQAALQRRLSAMEKGKFHKSSKDSSKRGRQTPVLYAMLDHSRSTKAASEKKSKGLGESRKDKK.

Positions 1–29 (MAPGAPSSSPSPILAALLFSSLVLSPTLA) are cleaved as a signal peptide. In terms of domain architecture, Ig-like V-type spans 30–143 (IVVYTDREVY…DIVGKTSQVT (114 aa)). Residues 30–153 (IVVYTDREVY…LYVFEKVPTR (124 aa)) are Extracellular-facing. The cysteines at positions 50 and 127 are disulfide-linked. An N-linked (GlcNAc...) (complex) asparagine glycan is attached at Asn-122. A helical membrane pass occupies residues 154 to 179 (YGVVLGAVIGGILGVVLLLLLLFYLI). Residues 180–248 (RYCWLRRQAA…GLGESRKDKK (69 aa)) lie on the Cytoplasmic side of the membrane. A Phosphoserine; by PKC modification is found at Ser-210. Residues 222 to 248 (MLDHSRSTKAASEKKSKGLGESRKDKK) form a disordered region. Positions 224–248 (DHSRSTKAASEKKSKGLGESRKDKK) are enriched in basic and acidic residues. A phosphoserine mark is found at Ser-226 and Ser-228. Ser-233 carries the post-translational modification Phosphoserine; by PKC. The residue at position 237 (Ser-237) is a Phosphoserine. Ser-243 is modified (phosphoserine; by PKC).

Belongs to the myelin P0 protein family. Homodimer and homotetramer. In terms of processing, N-glycosylated; contains sulfate-substituted glycan. As to expression, found only in peripheral nervous system Schwann cells.

It localises to the cell membrane. In terms of biological role, is an adhesion molecule necessary for normal myelination in the peripheral nervous system. It mediates adhesion between adjacent myelin wraps and ultimately drives myelin compaction. This chain is Myelin protein P0 (Mpz), found in Rattus norvegicus (Rat).